We begin with the raw amino-acid sequence, 117 residues long: UPF0342 protein lwe2240 (117 aa).

Belongs to the UPF0342 family.

The sequence is that of UPF0342 protein lwe2240 from Listeria welshimeri serovar 6b (strain ATCC 35897 / DSM 20650 / CCUG 15529 / CIP 8149 / NCTC 11857 / SLCC 5334 / V8).